The chain runs to 346 residues: Tetraacyldisaccharide 4'-kinase (346 aa).

54–61 is an ATP binding site; that stretch reads TVGGAGKT.

Belongs to the LpxK family.

It catalyses the reaction a lipid A disaccharide + ATP = a lipid IVA + ADP + H(+). It participates in glycolipid biosynthesis; lipid IV(A) biosynthesis; lipid IV(A) from (3R)-3-hydroxytetradecanoyl-[acyl-carrier-protein] and UDP-N-acetyl-alpha-D-glucosamine: step 6/6. Functionally, transfers the gamma-phosphate of ATP to the 4'-position of a tetraacyldisaccharide 1-phosphate intermediate (termed DS-1-P) to form tetraacyldisaccharide 1,4'-bis-phosphate (lipid IVA). The polypeptide is Tetraacyldisaccharide 4'-kinase (Sinorhizobium fredii (strain NBRC 101917 / NGR234)).